A 178-amino-acid chain; its full sequence is Transcription antitermination protein NusB (178 aa).

The protein belongs to the NusB family.

Its function is as follows. Involved in transcription antitermination. Required for transcription of ribosomal RNA (rRNA) genes. Binds specifically to the boxA antiterminator sequence of the ribosomal RNA (rrn) operons. The polypeptide is Transcription antitermination protein NusB (Alkalilimnicola ehrlichii (strain ATCC BAA-1101 / DSM 17681 / MLHE-1)).